Consider the following 90-residue polypeptide: Large ribosomal subunit protein eL37 (90 aa).

Residues C19, C22, C34, and C37 each contribute to the Zn(2+) site. A C4-type zinc finger spans residues 19–37; it reads CRRCGRQSYHKQKNSCSSC. Residues 21–31 show a composition bias toward basic residues; sequence RCGRQSYHKQK. Residues 21-59 form a disordered region; that stretch reads RCGRQSYHKQKNSCSSCGYPNPKMRNPGSIKARRRRTIG.

This sequence belongs to the eukaryotic ribosomal protein eL37 family. Requires Zn(2+) as cofactor.

Binds to the 23S rRNA. The chain is Large ribosomal subunit protein eL37 (RPL37) from Encephalitozoon cuniculi (strain GB-M1) (Microsporidian parasite).